A 731-amino-acid polypeptide reads, in one-letter code: 1,4-alpha-glucan branching enzyme GlgB (731 aa).

Aspartate 408 (nucleophile) is an active-site residue. The active-site Proton donor is the glutamate 461.

It belongs to the glycosyl hydrolase 13 family. GlgB subfamily. As to quaternary structure, monomer.

The catalysed reaction is Transfers a segment of a (1-&gt;4)-alpha-D-glucan chain to a primary hydroxy group in a similar glucan chain.. Its pathway is glycan biosynthesis; glycogen biosynthesis. Functionally, catalyzes the formation of the alpha-1,6-glucosidic linkages in glycogen by scission of a 1,4-alpha-linked oligosaccharide from growing alpha-1,4-glucan chains and the subsequent attachment of the oligosaccharide to the alpha-1,6 position. The sequence is that of 1,4-alpha-glucan branching enzyme GlgB from Corynebacterium glutamicum (strain ATCC 13032 / DSM 20300 / JCM 1318 / BCRC 11384 / CCUG 27702 / LMG 3730 / NBRC 12168 / NCIMB 10025 / NRRL B-2784 / 534).